A 326-amino-acid chain; its full sequence is Deoxyuridine 5'-triphosphate nucleotidohydrolase (326 aa).

Residues 218–220 and 321–322 contribute to the substrate site; these read RSS and FG.

The protein belongs to the dUTPase family. The cofactor is Mg(2+).

The enzyme catalyses dUTP + H2O = dUMP + diphosphate + H(+). Involved in nucleotide metabolism: produces dUMP, the immediate precursor of thymidine nucleotides and decreases the intracellular concentration of dUTP to avoid uracil incorporation into viral DNA. This is Deoxyuridine 5'-triphosphate nucleotidohydrolase from Equus caballus (Horse).